We begin with the raw amino-acid sequence, 183 residues long: ATP synthase subunit delta (183 aa).

The protein belongs to the ATPase delta chain family. As to quaternary structure, F-type ATPases have 2 components, F(1) - the catalytic core - and F(0) - the membrane proton channel. F(1) has five subunits: alpha(3), beta(3), gamma(1), delta(1), epsilon(1). F(0) has three main subunits: a(1), b(2) and c(10-14). The alpha and beta chains form an alternating ring which encloses part of the gamma chain. F(1) is attached to F(0) by a central stalk formed by the gamma and epsilon chains, while a peripheral stalk is formed by the delta and b chains.

It is found in the cell inner membrane. Functionally, f(1)F(0) ATP synthase produces ATP from ADP in the presence of a proton or sodium gradient. F-type ATPases consist of two structural domains, F(1) containing the extramembraneous catalytic core and F(0) containing the membrane proton channel, linked together by a central stalk and a peripheral stalk. During catalysis, ATP synthesis in the catalytic domain of F(1) is coupled via a rotary mechanism of the central stalk subunits to proton translocation. In terms of biological role, this protein is part of the stalk that links CF(0) to CF(1). It either transmits conformational changes from CF(0) to CF(1) or is implicated in proton conduction. The sequence is that of ATP synthase subunit delta from Desulfosudis oleivorans (strain DSM 6200 / JCM 39069 / Hxd3) (Desulfococcus oleovorans).